The chain runs to 563 residues: Eukaryotic translation initiation factor 3 subunit D-1 (563 aa).

Positions 98-167 are disordered; the sequence is VQKPPHQRGR…GPPPKMRESS (70 aa). Basic residues predominate over residues 100-121; it reads KPPHQRGRFRNMRNSRSGRGRN. At Thr-128 the chain carries Phosphothreonine. Residues 291-305 form an RNA gate region; that stretch reads EFDLLTVNETSVEPP.

The protein belongs to the eIF-3 subunit D family. Component of the eukaryotic translation initiation factor 3 (eIF-3) complex. The eIF-3 complex interacts with pix.

The protein localises to the cytoplasm. Functionally, mRNA cap-binding component of the eukaryotic translation initiation factor 3 (eIF-3) complex, which is involved in protein synthesis of a specialized repertoire of mRNAs and, together with other initiation factors, stimulates binding of mRNA and methionyl-tRNAi to the 40S ribosome. The eIF-3 complex specifically targets and initiates translation of a subset of mRNAs involved in cell proliferation. In the eIF-3 complex, eif3d specifically recognizes and binds the 7-methylguanosine cap of a subset of mRNAs. This chain is Eukaryotic translation initiation factor 3 subunit D-1, found in Drosophila virilis (Fruit fly).